Reading from the N-terminus, the 107-residue chain is SH3 domain-binding glutamic acid-rich-like protein 2 (107 aa).

An SH3-binding motif is present at residues 61–67 (QGNPLPP).

Belongs to the SH3BGR family.

The protein localises to the nucleus. This Mus musculus (Mouse) protein is SH3 domain-binding glutamic acid-rich-like protein 2 (Sh3bgrl2).